The following is a 313-amino-acid chain: Leucine-rich repeat-containing protein 52 (313 aa).

Positions 1 to 23 (MSLASGPGPGWLLFSFGMGLVSG) are cleaved as a signal peptide. Positions 24–53 (SKCPNNCLCQAQEVICTGKQLTEYPLDIPL) constitute an LRRNT domain. Residues 24-244 (SKCPNNCLCQ…MCITHLDHKD (221 aa)) lie on the Extracellular side of the membrane. Disulfide bonds link Cys-26–Cys-32 and Cys-30–Cys-39. LRR repeat units lie at residues 54–75 (NTRR…HLGL), 78–99 (DLVY…TFIG), 102–123 (KLIY…TFSV), 126–148 (NLVQ…TFAN), and 151–172 (SLRY…ALYH). Residues Asn-112 and Asn-148 are each glycosylated (N-linked (GlcNAc...) asparagine). In terms of domain architecture, LRRCT spans 184 to 238 (NPWKCNCSFLDFAIFLIVFHMDPSDDLNATCVEPTELTGWPITRVGNPLRYMCIT). 2 disulfide bridges follow: Cys-188–Cys-214 and Cys-190–Cys-236. Asn-189 and Asn-211 each carry an N-linked (GlcNAc...) asparagine glycan. The chain crosses the membrane as a helical span at residues 245–265 (YIFLLLIGFCIFAAGTVAAWL). The Cytoplasmic segment spans residues 266–313 (TGVCAVLYQNTRHKSSEEDEDEAGTRVEVSRRIFQTQTSSVQEFPQLI).

In terms of assembly, may interact with KCNU1; this interaction may be required for LRRC52 stability and may change the channel gating properties. Interacts with KCNMA1. In terms of processing, N-glycosylated. As to expression, mainly expressed in testis and skeletal muscle.

The protein resides in the cell membrane. Its function is as follows. Auxiliary protein of the large-conductance, voltage and calcium-activated potassium channel (BK alpha). Modulates gating properties by producing a marked shift in the BK channel's voltage dependence of activation in the hyperpolarizing direction, and in the absence of calcium. KCNU1 channel auxiliary protein. Modulates KCNU1 gating properties. The chain is Leucine-rich repeat-containing protein 52 (LRRC52) from Homo sapiens (Human).